Here is a 138-residue protein sequence, read N- to C-terminus: uncharacterized protein (138 aa).

This sequence to phage 186 CP81.

This is an uncharacterized protein from Salmonella typhimurium (strain LT2 / SGSC1412 / ATCC 700720).